A 79-amino-acid polypeptide reads, in one-letter code: Protein OPG081 (79 aa).

Topologically, residues 1 to 8 are intravirion; it reads MVDAITVL. Residues 9-29 traverse the membrane as a helical segment; the sequence is TAIGITVLMLLMVISGAAMIV. At 30–47 the chain is on the virion surface side; it reads KELNPNDIFTMQSLKFNR. Residues 48–68 form a helical membrane-spanning segment; it reads AVTIFKYIGLFIYIPGTIILY. Residues 69–79 are Intravirion-facing; the sequence is ATYVKSLLMKS.

This sequence belongs to the orthopoxvirus OPG081 family.

The protein localises to the virion membrane. Functionally, envelope protein. The polypeptide is Protein OPG081 (OPG081) (Vaccinia virus (strain Copenhagen) (VACV)).